The sequence spans 1401 residues: MASCASIDIEDATQHLRDILKLDRPAGGPSAESPRPSSAYNGDLNGLLVPDPLCSGDSTSANKTGLRTMPPINLQEKQVICLSGDDSSTCIGILAKEVEIVASSDSSISSKARGSNKVKIQPVAKYDWEQKYYYGNLIAVSNSFLAYAIRAANNGSAMVRVISVSTSERTLLKGFTGSVADLAFAHLNSPQLACLDEAGNLFVWRLALVNGKIQEEILVHIRQPEGTPLNHFRRIIWCPFIPEESEDCCEESSPTVALLHEDRAEVWDLDMLRSSHSTWPVDVSQIKQGFIVVKGHSTCLSEGALSPDGTVLATASHDGYVKFWQIYIEGQDEPRCLHEWKPHDGRPLSCLLFCDNHKKQDPDVPFWRFLITGADQNRELKMWCTVSWTCLQTIRFSPDIFSSVSVPPSLKVCLDLSAEYLILSDVQRKVLYVMELLQNQEEGHACFSSISEFLLTHPVLSFGIQVVSRCRLRHTEVLPAEEENDSLGADGTHGAGAMESAAGVLIKLFCVHTKALQDVQIRFQPQLNPDVVAPLPTHTAHEDFTFGESRPELGSEGLGSAAHGSQPDLRRIVELPAPADFLSLSSETKPKLMTPDAFMTPSASLQQITASPSSSSSGSSSSSSSSSSSLTAVSAMSSTSAVDPSLTRPPEELTLSPKLQLDGSLTMSSSGSLQASPRGLLPGLLPAPADKLTPKGPGQVPTATSALSLELQEVEPLGLPQASPSRTRSPDVISSASTALSQDIPEIASEALSRGFGSSAPEGLEPDSMASAASALHLLSPRPRPGPELGPQLGLDGGPGDGDRHNTPSLLEAALTQEASTPDSQVWPTAPDITRETCSTLAESPRNGLQEKHKSLAFHRPPYHLLQQRDSQDASAEQSDHDDEVASLASASGGFGTKVPAPRLPAKDWKTKGSPRTSPKLKRKSKKDDGDAAMGSRLTEHQVAEPPEDWPALIWQQQRELAELRHSQEELLQRLCTQLEGLQSTVTGHVERALETRHEQEQRRLERALAEGQQRGGQLQEQLTQQLSQALSSAVAGRLERSIRDEIKKTVPPCVSRSLEPMAGQLSNSVATKLTAVEGSMKENISKLLKSKNLTDAIARAAADTLQGPMQAAYREAFQSVVLPAFEKSCQAMFQQINDSFRLGTQEYLQQLESHMKSRKAREQEAREPVLAQLRGLVSTLQSATEQMAATVAGSVRAEVQHQLHVAVGSLQESILAQVQRIVKGEVSVALKEQQAAVTSSIMQAMRSAAGTPVPSAHLDCQAQQAHILQLLQQGHLNQAFQQALTAADLNLVLYVCETVDPAQVFGQPPCPLSQPVLLSLIQQLASDLGTRTDLKLSYLEEAVMHLDHSDPITRDHMGSVMAQVRQKLFQFLQAEPHNSLGKAARRLSLMLHGLVTPSLP.

Ala-2 bears the N-acetylalanine mark. Residues Ser-3 and Ser-6 each carry the phosphoserine modification. The interval 23–42 is disordered; the sequence is DRPAGGPSAESPRPSSAYNG. WD repeat units lie at residues 121–164, 167–206, 217–269, 287–326, 335–385, 389–426, and 432–475; these read QPVA…VISV, SERT…VWRL, ILVH…VWDL, KQGF…FWQI, RCLH…MWCT, TCLQ…LSDV, and YVME…LRHT. At Lys-125 the chain carries N6-acetyllysine. The tract at residues 545-565 is disordered; that stretch reads TFGESRPELGSEGLGSAAHGS. A phosphoserine mark is found at Ser-560, Ser-565, Ser-583, and Ser-585. 2 disordered regions span residues 603-628 and 662-702; these read ASLQ…SSSS and DGSL…QVPT. Residues 609–628 are compositionally biased toward low complexity; it reads TASPSSSSSGSSSSSSSSSS. Over residues 663-675 the composition is skewed to polar residues; that stretch reads GSLTMSSSGSLQA. Ser-676 bears the Phosphoserine mark. Residues 677–689 are compositionally biased toward low complexity; that stretch reads PRGLLPGLLPAPA. At Thr-693 the chain carries Phosphothreonine. Phosphoserine is present on residues Ser-708, Ser-723, and Ser-725. Disordered regions lie at residues 717–741 and 778–808; these read LGLP…TALS and LLSP…HNTP. A compositionally biased stretch (polar residues) spans 722-741; that stretch reads ASPSRTRSPDVISSASTALS. The residue at position 727 (Thr-727) is a Phosphothreonine. Ser-729 and Ser-741 each carry phosphoserine. Thr-821 is subject to Phosphothreonine. Phosphoserine is present on residues Ser-844, Ser-871, Ser-875, Ser-879, Ser-887, Ser-890, and Ser-892. The disordered stretch occupies residues 868–946; sequence QRDSQDASAE…RLTEHQVAEP (79 aa). The sufficient for nuclear localization stretch occupies residues 913–934; it reads GSPRTSPKLKRKSKKDDGDAAM. Residues 954-1025 are a coiled coil; it reads IWQQQRELAE…GGQLQEQLTQ (72 aa). Phosphoserine occurs at positions 967 and 1380.

The protein belongs to the WD repeat EDC4 family. In terms of assembly, part of a decapping complex consisting of DCP1A, DCP2, EDC3, EDC4 and probably DDX6. Part of a complex consisting of DCP1A, EDC3, EDC4 and DDX6. Part of a complex consisting of DCP1B, EDC3, EDC4 and DDX6. Interacts with DCP2. Interacts with RC3H1. Interacts with NBDY. Interacts with TEX19. Interacts with LSM14A. Interacts with DDX6. As to quaternary structure, (Microbial infection) Interacts with rotavirus A non-structural protein 2; this interaction probably plays a role in the sequestration of EDC4 in viral factories. Interacts with rotavirus A non-structural protein 5; this interaction probably plays a role in its sequestration in viral factories.

The protein localises to the cytoplasm. It is found in the P-body. It localises to the nucleus. In the process of mRNA degradation, seems to play a role in mRNA decapping. Component of a complex containing DCP2 and DCP1A which functions in decapping of ARE-containing mRNAs. Promotes complex formation between DCP1A and DCP2. Enhances the catalytic activity of DCP2 (in vitro). This is Enhancer of mRNA-decapping protein 4 (EDC4) from Homo sapiens (Human).